Reading from the N-terminus, the 183-residue chain is Beta-defensin 129 (183 aa).

Positions methionine 1–threonine 19 are cleaved as a signal peptide. 3 disulfides stabilise this stretch: cysteine 27-cysteine 53, cysteine 34-cysteine 48, and cysteine 38-cysteine 54. The segment at threonine 141–glutamine 183 is disordered. Over residues serine 159–leucine 170 the composition is skewed to pro residues.

This sequence belongs to the beta-defensin family.

It is found in the secreted. Its function is as follows. Has antibacterial activity. The protein is Beta-defensin 129 (DEFB129) of Pongo pygmaeus (Bornean orangutan).